The following is a 465-amino-acid chain: ATP synthase subunit beta (465 aa).

155 to 162 (GGAGVGKT) contacts ATP.

The protein belongs to the ATPase alpha/beta chains family. F-type ATPases have 2 components, CF(1) - the catalytic core - and CF(0) - the membrane proton channel. CF(1) has five subunits: alpha(3), beta(3), gamma(1), delta(1), epsilon(1). CF(0) has three main subunits: a(1), b(2) and c(9-12). The alpha and beta chains form an alternating ring which encloses part of the gamma chain. CF(1) is attached to CF(0) by a central stalk formed by the gamma and epsilon chains, while a peripheral stalk is formed by the delta and b chains.

Its subcellular location is the cell membrane. It catalyses the reaction ATP + H2O + 4 H(+)(in) = ADP + phosphate + 5 H(+)(out). Produces ATP from ADP in the presence of a proton gradient across the membrane. The catalytic sites are hosted primarily by the beta subunits. This chain is ATP synthase subunit beta, found in Buchnera aphidicola subsp. Baizongia pistaciae (strain Bp).